The sequence spans 195 residues: Thymidine kinase (195 aa).

ATP-binding positions include 15 to 22 (GSMFSGKS) and 88 to 91 (DEVQ). The active-site Proton acceptor is Glu-89. Residues Cys-145, Cys-148, Cys-183, and Xaa-186 each coordinate Zn(2+).

This sequence belongs to the thymidine kinase family. As to quaternary structure, homotetramer.

The protein localises to the cytoplasm. It catalyses the reaction thymidine + ATP = dTMP + ADP + H(+). The chain is Thymidine kinase from Bacillus cereus (strain ATCC 10987 / NRS 248).